We begin with the raw amino-acid sequence, 255 residues long: Imidazole glycerol phosphate synthase subunit HisF (255 aa).

Residues aspartate 11 and aspartate 130 contribute to the active site.

It belongs to the HisA/HisF family. In terms of assembly, heterodimer of HisH and HisF.

It is found in the cytoplasm. It catalyses the reaction 5-[(5-phospho-1-deoxy-D-ribulos-1-ylimino)methylamino]-1-(5-phospho-beta-D-ribosyl)imidazole-4-carboxamide + L-glutamine = D-erythro-1-(imidazol-4-yl)glycerol 3-phosphate + 5-amino-1-(5-phospho-beta-D-ribosyl)imidazole-4-carboxamide + L-glutamate + H(+). The protein operates within amino-acid biosynthesis; L-histidine biosynthesis; L-histidine from 5-phospho-alpha-D-ribose 1-diphosphate: step 5/9. Its function is as follows. IGPS catalyzes the conversion of PRFAR and glutamine to IGP, AICAR and glutamate. The HisF subunit catalyzes the cyclization activity that produces IGP and AICAR from PRFAR using the ammonia provided by the HisH subunit. The protein is Imidazole glycerol phosphate synthase subunit HisF of Exiguobacterium sp. (strain ATCC BAA-1283 / AT1b).